The sequence spans 303 residues: Quinolinate synthase (303 aa).

Positions 23 and 40 each coordinate iminosuccinate. A [4Fe-4S] cluster-binding site is contributed by C85. Iminosuccinate-binding positions include 111–113 (YIN) and S128. C171 provides a ligand contact to [4Fe-4S] cluster. Iminosuccinate is bound by residues 197–199 (HPE) and T214. C259 serves as a coordination point for [4Fe-4S] cluster.

Belongs to the quinolinate synthase family. Type 2 subfamily. It depends on [4Fe-4S] cluster as a cofactor.

Its subcellular location is the cytoplasm. The catalysed reaction is iminosuccinate + dihydroxyacetone phosphate = quinolinate + phosphate + 2 H2O + H(+). It participates in cofactor biosynthesis; NAD(+) biosynthesis; quinolinate from iminoaspartate: step 1/1. Catalyzes the condensation of iminoaspartate with dihydroxyacetone phosphate to form quinolinate. The polypeptide is Quinolinate synthase (Clostridium acetobutylicum (strain ATCC 824 / DSM 792 / JCM 1419 / IAM 19013 / LMG 5710 / NBRC 13948 / NRRL B-527 / VKM B-1787 / 2291 / W)).